The chain runs to 416 residues: LL-diaminopimelate aminotransferase (416 aa).

Residues Tyr-15 and Gly-42 each coordinate substrate. Pyridoxal 5'-phosphate contacts are provided by residues Tyr-72, 108-109 (SK), Tyr-132, Asn-187, Tyr-218, and 246-248 (SFS). The substrate site is built by Lys-109, Tyr-132, and Asn-187. An N6-(pyridoxal phosphate)lysine modification is found at Lys-249. Residues Arg-257 and Asn-292 each coordinate pyridoxal 5'-phosphate. The substrate site is built by Asn-292 and Arg-388.

The protein belongs to the class-I pyridoxal-phosphate-dependent aminotransferase family. LL-diaminopimelate aminotransferase subfamily. Homodimer. Pyridoxal 5'-phosphate is required as a cofactor.

The catalysed reaction is (2S,6S)-2,6-diaminopimelate + 2-oxoglutarate = (S)-2,3,4,5-tetrahydrodipicolinate + L-glutamate + H2O + H(+). It participates in amino-acid biosynthesis; L-lysine biosynthesis via DAP pathway; LL-2,6-diaminopimelate from (S)-tetrahydrodipicolinate (aminotransferase route): step 1/1. In terms of biological role, involved in the synthesis of meso-diaminopimelate (m-DAP or DL-DAP), required for both lysine and peptidoglycan biosynthesis. Catalyzes the direct conversion of tetrahydrodipicolinate to LL-diaminopimelate. The chain is LL-diaminopimelate aminotransferase from Synechococcus sp. (strain JA-2-3B'a(2-13)) (Cyanobacteria bacterium Yellowstone B-Prime).